A 280-amino-acid polypeptide reads, in one-letter code: ESX-1 secretion-associated protein EspJ (280 aa).

Phosphoserine is present on serine 70. 2 stretches are compositionally biased toward low complexity: residues 167-181 (QTIS…QSAQ) and 246-280 (PAQA…TTTL). Residues 167-280 (QTISQTAQQA…TPAPSTTTTL (114 aa)) form a disordered region.

Post-translationally, phosphorylated at Ser-70.

It is found in the secreted. In terms of biological role, could be involved in regulation of growth and intracellular survival. The chain is ESX-1 secretion-associated protein EspJ from Mycobacterium tuberculosis (strain CDC 1551 / Oshkosh).